The chain runs to 220 residues: Deoxyribose-phosphate aldolase (220 aa).

The active-site Proton donor/acceptor is aspartate 89. The active-site Schiff-base intermediate with acetaldehyde is the lysine 151. Lysine 180 functions as the Proton donor/acceptor in the catalytic mechanism.

Belongs to the DeoC/FbaB aldolase family. DeoC type 1 subfamily.

The protein localises to the cytoplasm. The enzyme catalyses 2-deoxy-D-ribose 5-phosphate = D-glyceraldehyde 3-phosphate + acetaldehyde. It participates in carbohydrate degradation; 2-deoxy-D-ribose 1-phosphate degradation; D-glyceraldehyde 3-phosphate and acetaldehyde from 2-deoxy-alpha-D-ribose 1-phosphate: step 2/2. Its function is as follows. Catalyzes a reversible aldol reaction between acetaldehyde and D-glyceraldehyde 3-phosphate to generate 2-deoxy-D-ribose 5-phosphate. This Streptococcus sanguinis (strain SK36) protein is Deoxyribose-phosphate aldolase.